The primary structure comprises 243 residues: Aldehyde decarbonylase (243 aa).

Fe cation is bound by residues E45, E73, H76, E128, and H160.

The protein belongs to the aldehyde decarbonylase family. It depends on Binds 2 metal cations per subunit. The catalytic dinuclear metal-binding site could be either a di-iron or a manganese-iron cofactor. as a cofactor.

It catalyses the reaction a long-chain fatty aldehyde + 2 NADPH + O2 + H(+) = a long-chain alkane + formate + 2 NADP(+) + H2O. Its function is as follows. Catalyzes the decarbonylation of fatty aldehydes to alkanes. Requires the presence of ferredoxin, ferredoxin reductase and NADPH for in vitro decarbonylase activity. Involved in the biosynthesis of alkanes, mainly heptadecane and pentadecane. The polypeptide is Aldehyde decarbonylase (Prochlorococcus marinus (strain MIT 9313)).